The following is a 397-amino-acid chain: MSLLNPYFGEFGGRFVPQILIPALNQLEAAFVDARDDPTFQTQFNDLLHNYAGRPTALTLCRNLTAGTRTRLYLKREDLLHGGAHKTNQVLGQALLARRMGKTEIIAETGAGQHGVATALACALLGLKCRVYMGAKDVARQSPNVFRMRLMGAEVIPVHSGSATLKDACNEALRDWSANYDQAHYLLGTAAGPHPYPTIVREFQRMIGAETRRQILQAEGRLPDAVLACVGGGSNAIGMFADFIDDASVQLIGVEPAGLGIETGQHGAPLSHGRVGIYFGMRSPMMQTAEGQIEESYSLSAGLDFPSVGPQHAHLNSIGRADYVSATDDEALAAFMQLSRQEGIIPALESAHALAHALKLIHQQPEKEQLLVVNLSGRGDKDIFTVHDILQSRGEIQ.

N6-(pyridoxal phosphate)lysine is present on Lys86.

It belongs to the TrpB family. In terms of assembly, tetramer of two alpha and two beta chains. Pyridoxal 5'-phosphate is required as a cofactor.

The catalysed reaction is (1S,2R)-1-C-(indol-3-yl)glycerol 3-phosphate + L-serine = D-glyceraldehyde 3-phosphate + L-tryptophan + H2O. Its pathway is amino-acid biosynthesis; L-tryptophan biosynthesis; L-tryptophan from chorismate: step 5/5. Its function is as follows. The beta subunit is responsible for the synthesis of L-tryptophan from indole and L-serine. This chain is Tryptophan synthase beta chain, found in Edwardsiella ictaluri (strain 93-146).